A 311-amino-acid polypeptide reads, in one-letter code: Olfactory receptor 8B8 (311 aa).

Over 1–25 (MAAENSSFVTQFILAGLTDQPGVQI) the chain is Extracellular. N-linked (GlcNAc...) asparagine glycosylation occurs at N5. Residues 26-46 (PLFFLFLGFYVVTVVGNLGLI) form a helical membrane-spanning segment. Residues 47 to 54 (TLIRLNSH) lie on the Cytoplasmic side of the membrane. Residues 55–75 (LHTPMYFFLYNLSFIDFCYSS) form a helical membrane-spanning segment. The Extracellular segment spans residues 76–99 (VITPKMLMSFVLKKNSISYAGCMT). A disulfide bridge connects residues C97 and C189. A helical membrane pass occupies residues 100–120 (QLFFFLFFVVSESFILSAMAY). Residues 121–139 (DRYVAICNPLLYMVTMSPQ) lie on the Cytoplasmic side of the membrane. Residues 140-160 (VCFLLLLGVYGMGFAGAMAHT) form a helical membrane-spanning segment. Topologically, residues 161–197 (ACMMGVTFCANNLVNHYMCDILPLLECACTSTYVNEL) are extracellular. Residues 198–217 (VVFVVVGIDIGVPTVTIFIS) form a helical membrane-spanning segment. Residues 218–237 (YALILSSIFHIDSTEGRSKA) are Cytoplasmic-facing. A helical membrane pass occupies residues 238–258 (FSTCSSHIIAVSLFFGSGAFM). The Extracellular segment spans residues 259 to 271 (YLKPFSLLAMNQG). Residues 272-292 (KVSSLFYTTVVPMLNPLIYSL) form a helical membrane-spanning segment. The Cytoplasmic segment spans residues 293–311 (RNKDVKVALKKILNKNAFS).

The protein belongs to the G-protein coupled receptor 1 family. In terms of tissue distribution, expressed in the tongue and testis.

It is found in the cell membrane. In terms of biological role, odorant receptor (Potential). May be involved in taste perception. In Homo sapiens (Human), this protein is Olfactory receptor 8B8.